The following is a 344-amino-acid chain: Biotin synthase (344 aa).

In terms of domain architecture, Radical SAM core spans 36–260; it reads NQIQISTLLS…MMPTSYIRLS (225 aa). [4Fe-4S] cluster-binding residues include cysteine 51, cysteine 55, and cysteine 58. [2Fe-2S] cluster is bound by residues cysteine 95, cysteine 126, cysteine 186, and arginine 258.

The protein belongs to the radical SAM superfamily. Biotin synthase family. In terms of assembly, homodimer. It depends on [4Fe-4S] cluster as a cofactor. The cofactor is [2Fe-2S] cluster.

The catalysed reaction is (4R,5S)-dethiobiotin + (sulfur carrier)-SH + 2 reduced [2Fe-2S]-[ferredoxin] + 2 S-adenosyl-L-methionine = (sulfur carrier)-H + biotin + 2 5'-deoxyadenosine + 2 L-methionine + 2 oxidized [2Fe-2S]-[ferredoxin]. Its pathway is cofactor biosynthesis; biotin biosynthesis; biotin from 7,8-diaminononanoate: step 2/2. Catalyzes the conversion of dethiobiotin (DTB) to biotin by the insertion of a sulfur atom into dethiobiotin via a radical-based mechanism. In Buchnera aphidicola subsp. Baizongia pistaciae (strain Bp), this protein is Biotin synthase.